Reading from the N-terminus, the 92-residue chain is Large ribosomal subunit protein eL43 (92 aa).

Zn(2+) contacts are provided by C39, C42, C57, and C60. The segment at 39 to 60 adopts a C4-type zinc-finger fold; it reads CPVCGFPKLKRASTSIWVCGKC.

The protein belongs to the eukaryotic ribosomal protein eL43 family. Putative zinc-binding subfamily. In terms of assembly, part of the 50S ribosomal subunit. It depends on Zn(2+) as a cofactor.

Binds to the 23S rRNA. The sequence is that of Large ribosomal subunit protein eL43 from Methanocaldococcus jannaschii (strain ATCC 43067 / DSM 2661 / JAL-1 / JCM 10045 / NBRC 100440) (Methanococcus jannaschii).